Reading from the N-terminus, the 598-residue chain is MSKRSPPPQPAHIPMAEQRWRPPYPYASSAAGGGGVDRRSRSGFCAATRTFHSLRSVGPLPPEELPLTVAAYAFSLLSSAPPLVVAGRGPALVDAATGIAVSYPAFVARVRFLAGGLWCSLGLRPGDVALVVSPSCLDVAVLYFALMSIGVVVSPANPASTADEYAHQVRLSRPAIAFVAPEVAARLPRHVSRVVIGSEVFDRLASASAAGGWAAPPAVAMKQPSTAALLYSSGTTGRVKAVAITHRNLIAQISAYNAIRETVAREAATDAGKGKPPPPSPSPPAAVTLFPLPLFHVMGFGLLTRTISSGETAVVMRRFDLAAAARAVERYRVTKLSAAPPVVVALTKSDEARRRDLSSLVAIVVGGAPLGREVSQRFATVFPSVQIVQSYGLTESTGPVATMAGPEESAAYGSVGRLAPRVQAKIVDTATGEVLGPGRRGELWIRGPVVMKGYVGDPEATAATITPDGWLKTGDLCYFNEDGYLYVVDRLKELIKYKGYQVPPAELEHILQSRPEIADAAVVPYPDEEAGQLPMAFVVRQPGAYLTEQQVMNCVAKHVAPYKKVRRVAFVNAIPKSPAGKILRRELVLQAMASTSRL.

Positions 232, 233, 234, 235, 236, and 240 each coordinate ATP. Residue arginine 318 participates in CoA binding. The tract at residues 320-389 (DLAAAARAVE…TVFPSVQIVQ (70 aa)) is SBD1. Glycine 367, glutamine 389, and threonine 394 together coordinate (E)-4-coumaroyl-AMP. The ATP site is built by glutamine 389, threonine 394, aspartate 475, and arginine 490. An SBD2 region spans residues 390–454 (SYGLTESTGP…IRGPVVMKGY (65 aa)). (E)-4-coumaroyl-AMP is bound by residues lysine 492 and lysine 496. Lysine 498 and glycine 499 together coordinate CoA. ATP is bound at residue lysine 581.

It belongs to the ATP-dependent AMP-binding enzyme family. Mg(2+) is required as a cofactor.

It catalyses the reaction (E)-4-coumarate + ATP + CoA = (E)-4-coumaroyl-CoA + AMP + diphosphate. The enzyme catalyses (E)-4-coumarate + ATP + H(+) = (E)-4-coumaroyl-AMP + diphosphate. It carries out the reaction (E)-4-coumaroyl-AMP + CoA = (E)-4-coumaroyl-CoA + AMP + H(+). Carboxylate--CoA ligase that may use 4-coumarate as substrate. Follows a two-step reaction mechanism, wherein the carboxylate substrate first undergoes adenylation by ATP, followed by a thioesterification in the presence of CoA to yield the final CoA thioester. The polypeptide is 4-coumarate--CoA ligase-like 6 (4CLL6) (Oryza sativa subsp. japonica (Rice)).